The primary structure comprises 281 residues: Acetyl-coenzyme A carboxylase carboxyl transferase subunit beta (281 aa).

The 258-residue stretch at 24-281 folds into the CoA carboxyltransferase N-terminal domain; the sequence is GLWYKSPKGK…TKLLTMLANN (258 aa).

Belongs to the AccD/PCCB family. In terms of assembly, acetyl-CoA carboxylase is a heterohexamer composed of biotin carboxyl carrier protein (AccB), biotin carboxylase (AccC) and two subunits each of ACCase subunit alpha (AccA) and ACCase subunit beta (AccD).

The protein resides in the cytoplasm. The enzyme catalyses N(6)-carboxybiotinyl-L-lysyl-[protein] + acetyl-CoA = N(6)-biotinyl-L-lysyl-[protein] + malonyl-CoA. It participates in lipid metabolism; malonyl-CoA biosynthesis; malonyl-CoA from acetyl-CoA: step 1/1. Component of the acetyl coenzyme A carboxylase (ACC) complex. Biotin carboxylase (BC) catalyzes the carboxylation of biotin on its carrier protein (BCCP) and then the CO(2) group is transferred by the transcarboxylase to acetyl-CoA to form malonyl-CoA. The sequence is that of Acetyl-coenzyme A carboxylase carboxyl transferase subunit beta from Amoebophilus asiaticus (strain 5a2).